The chain runs to 152 residues: 6,7-dimethyl-8-ribityllumazine synthase (152 aa).

Residues F21, A55 to E57, and C79 to I81 contribute to the 5-amino-6-(D-ribitylamino)uracil site. A84–T85 is a (2S)-2-hydroxy-3-oxobutyl phosphate binding site. H87 acts as the Proton donor in catalysis. F112 contributes to the 5-amino-6-(D-ribitylamino)uracil binding site. R126 contacts (2S)-2-hydroxy-3-oxobutyl phosphate.

It belongs to the DMRL synthase family. In terms of assembly, forms an icosahedral capsid composed of 60 subunits, arranged as a dodecamer of pentamers.

It catalyses the reaction (2S)-2-hydroxy-3-oxobutyl phosphate + 5-amino-6-(D-ribitylamino)uracil = 6,7-dimethyl-8-(1-D-ribityl)lumazine + phosphate + 2 H2O + H(+). It functions in the pathway cofactor biosynthesis; riboflavin biosynthesis; riboflavin from 2-hydroxy-3-oxobutyl phosphate and 5-amino-6-(D-ribitylamino)uracil: step 1/2. In terms of biological role, catalyzes the formation of 6,7-dimethyl-8-ribityllumazine by condensation of 5-amino-6-(D-ribitylamino)uracil with 3,4-dihydroxy-2-butanone 4-phosphate. This is the penultimate step in the biosynthesis of riboflavin. The polypeptide is 6,7-dimethyl-8-ribityllumazine synthase (Staphylococcus carnosus (strain TM300)).